The chain runs to 92 residues: Probable Fe(2+)-trafficking protein (92 aa).

It belongs to the Fe(2+)-trafficking protein family.

Functionally, could be a mediator in iron transactions between iron acquisition and iron-requiring processes, such as synthesis and/or repair of Fe-S clusters in biosynthetic enzymes. The protein is Probable Fe(2+)-trafficking protein of Shewanella frigidimarina (strain NCIMB 400).